We begin with the raw amino-acid sequence, 539 residues long: Chaperonin GroEL (539 aa).

Residues 29 to 32, 86 to 90, Gly413, 476 to 478, and Asp492 each bind ATP; these read TIGP, DGTTT, and NAA.

Belongs to the chaperonin (HSP60) family. Forms a cylinder of 14 subunits composed of two heptameric rings stacked back-to-back. Interacts with the co-chaperonin GroES.

Its subcellular location is the cytoplasm. It carries out the reaction ATP + H2O + a folded polypeptide = ADP + phosphate + an unfolded polypeptide.. Its function is as follows. Together with its co-chaperonin GroES, plays an essential role in assisting protein folding. The GroEL-GroES system forms a nano-cage that allows encapsulation of the non-native substrate proteins and provides a physical environment optimized to promote and accelerate protein folding. The sequence is that of Chaperonin GroEL from Pediococcus pentosaceus (strain ATCC 25745 / CCUG 21536 / LMG 10740 / 183-1w).